Consider the following 648-residue polypeptide: Transcription initiation factor TFIID subunit 5 (648 aa).

A compositionally biased stretch (low complexity) spans 1–13 (MDSENSSSHSISS). Positions 1-21 (MDSENSSSHSISSPQMFQNTH) are disordered. Residues 35–67 (MNNESLQMIIGYLRRNGLTETEELLTREAGPVL) form the LisH domain. WD repeat units follow at residues 317–358 (NAPI…KKLR), 392–431 (GHGGPVFSVNFSPDRRLLISSAGDRTVRLWSMETQRNAVI), 433–472 (RTPAVVWQAQFCSRGYYFATASADKTAAMWSTDRMHPLRI), 475–514 (DPYGDVGCIDYHPNCNYIAGGSDDRYVRVWDVCSGTRVRI), 517–556 (GHKASIIAVKFSPCGRYIVSLDAIGNLMIWDLAYQRLVAA), and 560–599 (EQAGTKGSITFSRDGGVFAVSHGNSSIQLYSLDTLIGTVL).

This sequence belongs to the WD repeat TAF5 family. In terms of assembly, component of the TFIID basal transcription factor complex, composed of TATA-box-binding protein tbp-1, and a number of TBP-associated factors (TAFs).

It localises to the nucleus. Its function is as follows. The TFIID basal transcription factor complex plays a major role in the initiation of RNA polymerase II (Pol II)-dependent transcription. TFIID recognizes and binds promoters via its subunit tbp-1, a TATA-box-binding protein, and promotes assembly of the pre-initiation complex (PIC). The TFIID complex consists of tbp-1 and TBP-associated factors (TAFs), including taf-5. Essential for early embryonic development, but not required for transcription of some genes; probably acts via activating transcription initiation by RNA Pol II, as part of the TFIID complex. This chain is Transcription initiation factor TFIID subunit 5, found in Caenorhabditis elegans.